Here is a 1063-residue protein sequence, read N- to C-terminus: ATP-dependent helicase hrq1 (1063 aa).

The tract at residues 224–243 is disordered; sequence TQSRKNQPVPPDSPSIPNDS. Residues 320-503 form the Helicase ATP-binding domain; sequence INHLWNGFHV…KIFGVDNIKL (184 aa). ATP is bound at residue 333–340; sequence TSTSSGKS. The DEAH box signature appears at 444 to 447; sequence DEAH. The Helicase C-terminal domain maps to 539–717; the sequence is EASKLLIKFA…ELPINIRSDE (179 aa).

It belongs to the helicase family. HRQ1 subfamily. As to quaternary structure, forms heptamer rings. Interacts with rhp14. Mg(2+) is required as a cofactor.

It localises to the nucleus. The enzyme catalyses Couples ATP hydrolysis with the unwinding of duplex DNA by translocating in the 3'-5' direction.. It carries out the reaction ATP + H2O = ADP + phosphate + H(+). Its function is as follows. Helicase with 3'-5' helicase activity involved in genome stability. Functions in the nucleotide excision repair (NER) pathway and plays a critical role in DNA interstrand cross-link repair. Unwinds relatively long duplex DNA up to 120-bp and requires a long 3'-tail of at least 70 nucleotides for efficient unwinding of duplex DNA. Shows both processive helicase and DNA strand annealing activities. Affects telomere length by a non-catalytic mechanism, probably through inhibiting telomerase by competing with it for ssDNA binding. In Schizosaccharomyces pombe (strain 972 / ATCC 24843) (Fission yeast), this protein is ATP-dependent helicase hrq1.